The chain runs to 557 residues: Glypican-4 (557 aa).

A signal peptide spans 1 to 18 (MARLGLLALLCTLAALSA). Position 357 is a phosphoserine (Ser357). O-linked (Xyl...) (glycosaminoglycan) serine glycosylation is found at Ser494, Ser498, and Ser500. Asn514 carries N-linked (GlcNAc...) asparagine glycosylation. A lipid anchor (GPI-anchor amidated serine) is attached at Ser529. Positions 530-557 (AGGAHAEAKPYLLAALCILFLAVQGEWR) are cleaved as a propeptide — removed in mature form.

This sequence belongs to the glypican family. As to expression, highly expressed in developing brain and kidney.

It localises to the cell membrane. The protein resides in the secreted. The protein localises to the extracellular space. Cell surface proteoglycan that bears heparan sulfate. May be involved in the development of kidney tubules and of the central nervous system. In Mus musculus (Mouse), this protein is Glypican-4 (Gpc4).